Consider the following 176-residue polypeptide: Ribosome maturation factor RimM (176 aa).

A PRC barrel domain is found at Glu97–Phe176.

This sequence belongs to the RimM family. As to quaternary structure, binds ribosomal protein uS19.

The protein localises to the cytoplasm. Functionally, an accessory protein needed during the final step in the assembly of 30S ribosomal subunit, possibly for assembly of the head region. Essential for efficient processing of 16S rRNA. May be needed both before and after RbfA during the maturation of 16S rRNA. It has affinity for free ribosomal 30S subunits but not for 70S ribosomes. This is Ribosome maturation factor RimM from Shewanella amazonensis (strain ATCC BAA-1098 / SB2B).